The following is a 199-amino-acid chain: Lysine exporter LysE (199 aa).

5 helical membrane-spanning segments follow: residues 6–26 (VVGFLACFTLIAAIGAQNAFV), 42–62 (LCTVSDIVLIAAGIAGFGALI), 68–88 (ALNVVKFGGAAFLIGYGLLAA), 144–164 (WLFGLGAVTASAVWFATLGFG), and 178–198 (WRILDGLIAVMMVALGISLTV).

Belongs to the LysE/ArgO transporter (TC 2.A.75) family.

The protein resides in the cell inner membrane. In terms of biological role, catalyzes the efflux of L-lysine. This is Lysine exporter LysE from Mycobacterium bovis (strain ATCC BAA-935 / AF2122/97).